The sequence spans 142 residues: Large ribosomal subunit protein uL13 (142 aa).

This sequence belongs to the universal ribosomal protein uL13 family. As to quaternary structure, part of the 50S ribosomal subunit.

This protein is one of the early assembly proteins of the 50S ribosomal subunit, although it is not seen to bind rRNA by itself. It is important during the early stages of 50S assembly. This is Large ribosomal subunit protein uL13 from Vibrio atlanticus (strain LGP32) (Vibrio splendidus (strain Mel32)).